The following is a 282-amino-acid chain: Exo-glucosaminidase LytG (282 aa).

Positions Met-1–Ala-29 are cleaved as a signal peptide. Positions Ser-203–Ala-281 constitute a GW domain.

The protein belongs to the glycosyl hydrolase 73 family. Mg(2+) is required as a cofactor.

It is found in the secreted. The protein resides in the cell wall. Inhibited by EDTA. Its function is as follows. Is the major glucosaminidase responsible for peptidoglycan structural determination during vegetative growth. Catalyzes the hydrolysis of 1,4-beta-linkages between N-acetyl-D-glucosamine and N-acetylmuramic acid residues in peptidoglycan. Acts processively from the ends of the glycan strands. Also plays a role in motility, chemotaxis and cell division. In Bacillus subtilis (strain 168), this protein is Exo-glucosaminidase LytG (lytG).